The primary structure comprises 148 residues: UPF0178 protein SH2212 (148 aa).

Belongs to the UPF0178 family.

In Staphylococcus haemolyticus (strain JCSC1435), this protein is UPF0178 protein SH2212.